A 63-amino-acid chain; its full sequence is MKAQELREKGVEELNTELLNLLREQFNLRMQGASGQLQQTHLLKQVRRNVARVKTLLTEKAGV.

This sequence belongs to the universal ribosomal protein uL29 family.

This chain is Large ribosomal subunit protein uL29 (rpmC), found in Buchnera aphidicola subsp. Acyrthosiphon kondoi (Acyrthosiphon kondoi symbiotic bacterium).